The primary structure comprises 205 residues: Holliday junction branch migration complex subunit RuvA (205 aa).

The interval 1-67 (MIGWLKGDVQ…ADNLQLFGFL (67 aa)) is domain I. The segment at 68-146 (QLAERDLFRE…DSVASTGPER (79 aa)) is domain II. A flexible linker region spans residues 147–155 (NQLDPVAPD). The segment at 155 to 205 (DLIATLETLGFETHEIRDALQRLNGMGGPQDGDDDDAWLRACIKLMSSTDP) is domain III.

Belongs to the RuvA family. In terms of assembly, homotetramer. Forms an RuvA(8)-RuvB(12)-Holliday junction (HJ) complex. HJ DNA is sandwiched between 2 RuvA tetramers; dsDNA enters through RuvA and exits via RuvB. An RuvB hexamer assembles on each DNA strand where it exits the tetramer. Each RuvB hexamer is contacted by two RuvA subunits (via domain III) on 2 adjacent RuvB subunits; this complex drives branch migration. In the full resolvosome a probable DNA-RuvA(4)-RuvB(12)-RuvC(2) complex forms which resolves the HJ.

The protein localises to the cytoplasm. In terms of biological role, the RuvA-RuvB-RuvC complex processes Holliday junction (HJ) DNA during genetic recombination and DNA repair, while the RuvA-RuvB complex plays an important role in the rescue of blocked DNA replication forks via replication fork reversal (RFR). RuvA specifically binds to HJ cruciform DNA, conferring on it an open structure. The RuvB hexamer acts as an ATP-dependent pump, pulling dsDNA into and through the RuvAB complex. HJ branch migration allows RuvC to scan DNA until it finds its consensus sequence, where it cleaves and resolves the cruciform DNA. The sequence is that of Holliday junction branch migration complex subunit RuvA from Parasynechococcus marenigrum (strain WH8102).